Here is a 681-residue protein sequence, read N- to C-terminus: Conserved oligomeric Golgi complex subunit 2 (681 aa).

Belongs to the COG2 family. In terms of assembly, component of the conserved oligomeric Golgi complex which is composed of eight different subunits and is required for normal Golgi morphology and localization.

It localises to the golgi apparatus membrane. Its function is as follows. Required for normal Golgi morphology and function. The polypeptide is Conserved oligomeric Golgi complex subunit 2 (cogc-2) (Caenorhabditis elegans).